Reading from the N-terminus, the 422-residue chain is PHAF1 protein T01G9.2 (422 aa).

Belongs to the PHAF1 family.

It is found in the cytoplasm. It localises to the preautophagosomal structure. May play a regulatory role in autophagic activity. The polypeptide is PHAF1 protein T01G9.2 (Caenorhabditis elegans).